A 336-amino-acid polypeptide reads, in one-letter code: UDP-N-acetylenolpyruvoylglucosamine reductase (336 aa).

The region spanning 17–188 (LRSLAERFVE…WDVTFRLPKK (172 aa)) is the FAD-binding PCMH-type domain. The active site involves R164. S237 (proton donor) is an active-site residue. The active site involves E332.

It belongs to the MurB family. It depends on FAD as a cofactor.

It is found in the cytoplasm. The catalysed reaction is UDP-N-acetyl-alpha-D-muramate + NADP(+) = UDP-N-acetyl-3-O-(1-carboxyvinyl)-alpha-D-glucosamine + NADPH + H(+). It functions in the pathway cell wall biogenesis; peptidoglycan biosynthesis. Its function is as follows. Cell wall formation. This chain is UDP-N-acetylenolpyruvoylglucosamine reductase, found in Bdellovibrio bacteriovorus (strain ATCC 15356 / DSM 50701 / NCIMB 9529 / HD100).